The chain runs to 189 residues: Pyridoxal 5'-phosphate synthase subunit PdxT (189 aa).

46–48 (GES) is a binding site for L-glutamine. Cys78 serves as the catalytic Nucleophile. Residues Arg107 and 136–137 (IR) each bind L-glutamine. Catalysis depends on charge relay system residues His173 and Glu175.

It belongs to the glutaminase PdxT/SNO family. In the presence of PdxS, forms a dodecamer of heterodimers. Only shows activity in the heterodimer.

It carries out the reaction aldehydo-D-ribose 5-phosphate + D-glyceraldehyde 3-phosphate + L-glutamine = pyridoxal 5'-phosphate + L-glutamate + phosphate + 3 H2O + H(+). It catalyses the reaction L-glutamine + H2O = L-glutamate + NH4(+). The protein operates within cofactor biosynthesis; pyridoxal 5'-phosphate biosynthesis. In terms of biological role, catalyzes the hydrolysis of glutamine to glutamate and ammonia as part of the biosynthesis of pyridoxal 5'-phosphate. The resulting ammonia molecule is channeled to the active site of PdxS. This chain is Pyridoxal 5'-phosphate synthase subunit PdxT, found in Roseiflexus sp. (strain RS-1).